Consider the following 174-residue polypeptide: Peroxisome assembly protein 22 (174 aa).

Residues 9-27 (GYLAIIAAVSIGAAAYLWW) traverse the membrane as a helical segment.

Belongs to the peroxin-22 family.

It localises to the peroxisome membrane. In terms of biological role, involved in peroxisome biogenesis. This Candida glabrata (strain ATCC 2001 / BCRC 20586 / JCM 3761 / NBRC 0622 / NRRL Y-65 / CBS 138) (Yeast) protein is Peroxisome assembly protein 22 (PEX22).